The chain runs to 325 residues: MLLPEEPAILEVRHAVRHWIAAHAPDGDVAVALSGGADSLALTAAAAVEARSAVALVVDHRLQRGSADVADGAAARARTLGCASAEVLPVDVTGSGGLEAAARQARYEALDAGRGTRPVLLGHTLDDQAETVLLGLSRGSGGRSIWGMSPYDSPWGRPLLGVRRAVTRQACTELGLDPHEDPHNSSPDFVRVRLRTEVLPLLEDVLGGGVAGALARTGEHLREEGAVLDAVAADAEAKVVVDGEIDAALLALSAPPVRRRVLRSWLLAAGARGLGDTQLRAVDDLVARWRGQGQVAVGGGTPDARLVVRRRRGRLNVGLDDRRRV.

Serine 34 to serine 39 contributes to the ATP binding site.

This sequence belongs to the tRNA(Ile)-lysidine synthase family.

The protein resides in the cytoplasm. It catalyses the reaction cytidine(34) in tRNA(Ile2) + L-lysine + ATP = lysidine(34) in tRNA(Ile2) + AMP + diphosphate + H(+). Ligates lysine onto the cytidine present at position 34 of the AUA codon-specific tRNA(Ile) that contains the anticodon CAU, in an ATP-dependent manner. Cytidine is converted to lysidine, thus changing the amino acid specificity of the tRNA from methionine to isoleucine. This chain is tRNA(Ile)-lysidine synthase, found in Rhodococcus opacus (strain B4).